A 340-amino-acid chain; its full sequence is Deubiquitinase SseL (340 aa).

Residue H222 is part of the active site. The Nucleophile role is filled by C284.

It belongs to the peptidase C79 family.

It localises to the secreted. The protein localises to the host cytoplasm. Functionally, effector proteins function to alter host cell physiology and promote bacterial survival in host tissues. This protease targets the host cell ubiquitin pathway by acting as a deubiquitinase in infected host cells. The polypeptide is Deubiquitinase SseL (sseL) (Salmonella arizonae (strain ATCC BAA-731 / CDC346-86 / RSK2980)).